The chain runs to 152 residues: Gamma-glutamylaminecyclotransferase C (152 aa).

9 to 12 (YGSL) lines the substrate pocket. The Proton acceptor role is filled by glutamate 84.

It belongs to the gamma-glutamylcyclotransferase family.

It catalyses the reaction epsilon-(gamma-L-glutamyl)-L-lysine = 5-oxo-L-proline + L-lysine. May contribute to degradation of proteins cross-linked by transglutaminases by degrading the cross-link between a lysine and a glutamic acid residue. Catalyzes the formation of 5-oxo-L-proline from L-gamma-glutamyl-L-epsilon-lysine. The chain is Gamma-glutamylaminecyclotransferase C (ggact.3) from Danio rerio (Zebrafish).